Here is a 189-residue protein sequence, read N- to C-terminus: GTPase KRas (189 aa).

M1 bears the N-acetylmethionine mark. T2 carries the N-acetylthreonine; in GTPase KRas, N-terminally processed modification. GTP is bound by residues 10–18, 29–35, and 59–60; these read GAGGVGKSA, VDEYDPT, and AG. The Effector region motif lies at 32-40; that stretch reads YDPTIEDSY. N6-acetyllysine is present on K104. 116–119 is a GTP binding site; it reads NKCD. Residues 166–185 form a hypervariable region region; the sequence is YRLKKISKEEKTPGCVKIKK. Residue K170 forms a Glycyl lysine isopeptide (Lys-Gly) (interchain with G-Cter in ubiquitin) linkage. The S-palmitoyl cysteine moiety is linked to residue C180. N6-palmitoyl lysine attachment occurs at residues K182, K184, and K185. C186 is subject to Cysteine methyl ester. A lipid anchor (S-farnesyl cysteine) is attached at C186. Residues 187 to 189 constitute a propeptide, removed in mature form; it reads VIM.

This sequence belongs to the small GTPase superfamily. Ras family. Interacts with PHLPP. Interacts (active GTP-bound form preferentially) with RGS14. Interacts (when farnesylated) with PDE6D; this promotes dissociation from the cell membrane. Interacts with SOS1. Interacts (when farnesylated) with GPR31. Interacts with RAP1GDS1. Interacts (active GTP-bound form) with both SHOC2 and PP1c (all isoforms) to form a tertiary complex; SHOC2 and PP1c preferably bind M-Ras/MRAS, but they also bind K-Ras/KRAS, N-Ras/NRAS and H-Ras/HRAS. Interacts (GTP-bound form) with MAPKAP1/SIN1; inhibiting K-Ras/KRAS activity. In terms of assembly, interacts (when farnesylated) with GPR31. In terms of processing, acetylation at Lys-104 prevents interaction with guanine nucleotide exchange factors (GEFs). Post-translationally, ubiquitinated by the BCR(LZTR1) E3 ubiquitin ligase complex at Lys-170 in a non-degradative manner, leading to inhibit Ras signaling by decreasing Ras association with membranes. Palmitoylated at Lys-182, Lys-184 and Lys-185. Lysine-depalmitoylation by SIRT2 promotes its localization to endomembranes in endocytic pathways.

Its subcellular location is the cell membrane. It localises to the endomembrane system. The protein resides in the cytoplasm. The protein localises to the cytosol. It catalyses the reaction GTP + H2O = GDP + phosphate + H(+). Alternates between an inactive form bound to GDP and an active form bound to GTP. Activated by a guanine nucleotide-exchange factor (GEF) and inactivated by a GTPase-activating protein (GAP). Interaction with SOS1 promotes exchange of bound GDP to GTP. Ras proteins bind GDP/GTP and possess intrinsic GTPase activity. Plays an important role in the regulation of cell proliferation. Plays a role in promoting oncogenic events by inducing transcriptional silencing of tumor suppressor genes (TSGs) in colorectal cancer (CRC) cells in a ZNF304-dependent manner. The protein is GTPase KRas (Kras) of Rattus norvegicus (Rat).